The following is a 519-amino-acid chain: O-fucosyltransferase 1 (519 aa).

Topologically, residues 1-24 (MRRLGHHRLHGKTGGVGTKGMVAK) are cytoplasmic. Residues 25-45 (LSIGVIVLLICTLSLLFSANI) form a helical; Signal-anchor for type II membrane protein membrane-spanning segment. The Lumenal portion of the chain corresponds to 46 to 519 (GSNREPTRPS…TNSTVTGLER (474 aa)). The interval 67–86 (KSGGWRPSSAPRSDWPPPTK) is disordered. Residue Asn118 is glycosylated (N-linked (GlcNAc...) asparagine). Substrate is bound at residue 260 to 262 (HLR). N-linked (GlcNAc...) asparagine glycans are attached at residues Asn327, Asn357, and Asn511. The disordered stretch occupies residues 497-519 (RLESIRDPDSTSQTNSTVTGLER). The span at 506-519 (STSQTNSTVTGLER) shows a compositional bias: polar residues.

It belongs to the glycosyltransferase GT106 family.

The protein localises to the golgi apparatus membrane. It participates in glycan metabolism. The protein is O-fucosyltransferase 1 of Arabidopsis thaliana (Mouse-ear cress).